We begin with the raw amino-acid sequence, 209 residues long: MKLIIQDGKEEDHLQVLNKQLEIGIDEVGRGAVFGPVFSAAVVLTEKNGYTLKQLGVTDSKKLTEKKRKLLLPKIISLSSDYSLGQSSAREIDQLGIRYATELSMIRAIKKLKSKPYEVIIDGPLSLRLWKSHQRNIIAGDSKFTSIAAASIVAKVTRDFLMERLEKKFSGYFIFKNKGYGTKEHLLSLKANGVTNLHRKSFLTKLNLI.

The 190-residue stretch at 20–209 folds into the RNase H type-2 domain; that stretch reads QLEIGIDEVG…KSFLTKLNLI (190 aa). The a divalent metal cation site is built by Asp26, Glu27, and Asp122.

Belongs to the RNase HII family. Mn(2+) is required as a cofactor. Mg(2+) serves as cofactor.

Its subcellular location is the cytoplasm. It carries out the reaction Endonucleolytic cleavage to 5'-phosphomonoester.. Endonuclease that specifically degrades the RNA of RNA-DNA hybrids. The protein is Ribonuclease HII of Prochlorococcus marinus (strain MIT 9515).